Consider the following 266-residue polypeptide: Transcription factor BIP1 (266 aa).

Positions 1 to 73 (MAMYMPSTAS…DREAQRAIRA (73 aa)) are disordered. Polar residues-rich tracts occupy residues 7–22 (STAS…SGTP) and 47–56 (RSVSTLTPSQ). The bZIP domain maps to 54-95 (PSQLARKRANDREAQRAIRARTKEHIERLEREVEELKSKQNR). Residues 59 to 81 (RKRANDREAQRAIRARTKEHIER) form a basic motif region. The segment covering 61 to 73 (RANDREAQRAIRA) has biased composition (basic and acidic residues). The leucine-zipper stretch occupies residues 82–89 (LEREVEEL).

The protein belongs to the bZIP family. Expressed in appressoria.

It is found in the nucleus. Transcription factor that is required for infection of plants hosts. Is not implicated in the development of appressoria or the subsequent penetration of host leaves, but is necessary for the initial establishment of the fungus within plant cells by orchestrating the expression of a unique set of early invasion-related genes within appressoria, encoding secreted effectors, enzymes, secondary metabolism-related enzymes, and signaling membrane receptors. Controls the expression of targeted genes by interacting directly with a 5'-TGACTC-3' motif present in their promoters. The sequence is that of Transcription factor BIP1 from Pyricularia oryzae (strain 70-15 / ATCC MYA-4617 / FGSC 8958) (Rice blast fungus).